Reading from the N-terminus, the 83-residue chain is UPF0297 protein DSY2420 (83 aa).

It belongs to the UPF0297 family.

This chain is UPF0297 protein DSY2420, found in Desulfitobacterium hafniense (strain Y51).